A 402-amino-acid chain; its full sequence is Type II NADH:quinone oxidoreductase (402 aa).

Residues Gly12 to Ala16, Asn39 to Lys40, and Val83 each bind FAD. Glu172 is a catalytic residue. FAD is bound by residues Asp302, Ala319–Gln320, and Lys379.

Belongs to the NADH dehydrogenase family. The cofactor is FAD.

The protein resides in the cell membrane. It catalyses the reaction a quinone + NADH + H(+) = a quinol + NAD(+). Its function is as follows. Alternative, nonproton pumping NADH:quinone oxidoreductase that delivers electrons to the respiratory chain by oxidation of NADH and reduction of quinones, and contributes to the regeneration of NAD(+). In Staphylococcus aureus (strain bovine RF122 / ET3-1), this protein is Type II NADH:quinone oxidoreductase.